We begin with the raw amino-acid sequence, 132 residues long: Actin-related protein 2/3 complex subunit 5A (132 aa).

An N-acetylalanine modification is found at Ala-2.

The protein belongs to the ARPC5 family. Component of the Arp2/3 complex composed of ARP2, ARP3, ARPC1/p41-ARC, ARPC2/p34-ARC, ARPC3/p21-ARC, ARPC4/p20-ARC and ARPC5/p16-ARC. Expressed at low levels in all tissues with a relatively highest expression in inflorescences.

The protein localises to the cytoplasm. It localises to the cytoskeleton. Its subcellular location is the cell projection. Functions as a component of the Arp2/3 complex which is involved in regulation of actin polymerization and together with an activating nucleation-promoting factor (NPF) mediates the formation of branched actin networks. Arp2/3 complex plays a critical role in the control of cell morphogenesis via the modulation of cell polarity development. The protein is Actin-related protein 2/3 complex subunit 5A (ARPC5A) of Arabidopsis thaliana (Mouse-ear cress).